Reading from the N-terminus, the 468-residue chain is Ribulose bisphosphate carboxylase large chain (468 aa).

N6,N6,N6-trimethyllysine is present on lysine 5. Substrate contacts are provided by asparagine 114 and threonine 164. The active-site Proton acceptor is the lysine 166. Lysine 168 is a substrate binding site. Mg(2+) contacts are provided by lysine 192, aspartate 194, and glutamate 195. Lysine 192 carries the N6-carboxylysine modification. The active-site Proton acceptor is histidine 285. Arginine 286, histidine 318, and serine 370 together coordinate substrate.

It belongs to the RuBisCO large chain family. Type I subfamily. In terms of assembly, heterohexadecamer of 8 large chains and 8 small chains; disulfide-linked. The disulfide link is formed within the large subunit homodimers. The cofactor is Mg(2+). The disulfide bond which can form in the large chain dimeric partners within the hexadecamer appears to be associated with oxidative stress and protein turnover.

It localises to the plastid. Its subcellular location is the chloroplast. The enzyme catalyses 2 (2R)-3-phosphoglycerate + 2 H(+) = D-ribulose 1,5-bisphosphate + CO2 + H2O. It carries out the reaction D-ribulose 1,5-bisphosphate + O2 = 2-phosphoglycolate + (2R)-3-phosphoglycerate + 2 H(+). RuBisCO catalyzes two reactions: the carboxylation of D-ribulose 1,5-bisphosphate, the primary event in carbon dioxide fixation, as well as the oxidative fragmentation of the pentose substrate in the photorespiration process. Both reactions occur simultaneously and in competition at the same active site. The polypeptide is Ribulose bisphosphate carboxylase large chain (Catesbaea spinosa).